A 126-amino-acid chain; its full sequence is Urease subunit beta (126 aa).

This sequence belongs to the urease beta subunit family. In terms of assembly, heterotrimer of UreA (gamma), UreB (beta) and UreC (alpha) subunits. Three heterotrimers associate to form the active enzyme.

It is found in the cytoplasm. The enzyme catalyses urea + 2 H2O + H(+) = hydrogencarbonate + 2 NH4(+). Its pathway is nitrogen metabolism; urea degradation; CO(2) and NH(3) from urea (urease route): step 1/1. This Frankia casuarinae (strain DSM 45818 / CECT 9043 / HFP020203 / CcI3) protein is Urease subunit beta.